Here is a 314-residue protein sequence, read N- to C-terminus: Malate dehydrogenase (314 aa).

NAD(+) is bound by residues 11-16 and Asp-35; that span reads GSGNIG. Substrate-binding residues include Arg-84 and Arg-90. NAD(+) contacts are provided by residues Asn-97 and 120–122; that span reads ITN. Positions 122 and 153 each coordinate substrate. His-177 acts as the Proton acceptor in catalysis.

It belongs to the LDH/MDH superfamily. MDH type 3 family.

It catalyses the reaction (S)-malate + NAD(+) = oxaloacetate + NADH + H(+). Its function is as follows. Catalyzes the reversible oxidation of malate to oxaloacetate. The polypeptide is Malate dehydrogenase (Rickettsia typhi (strain ATCC VR-144 / Wilmington)).